The primary structure comprises 225 residues: O-methyltransferase rstn1 (225 aa).

Residues Q97 and H142 each coordinate S-adenosyl-L-methionine.

This sequence belongs to the methyltransferase superfamily.

It carries out the reaction desmethylrestrictinol + S-adenosyl-L-methionine = restrictinol + S-adenosyl-L-homocysteine + H(+). The protein operates within antifungal biosynthesis. Functionally, O-methyltransferase; part of the gene cluster that mediates the biosynthesis of the tetrahydropyranyl antifungal agent restricticin that acts as an inhibitor of CYP51 and blocks the ergosterol biosynthesis. Within the pathway, rstn1 uses S-adenosylmethionine to methylate position C4 of desmethylrestrictinol to produce restrictinol. The highly reducing polyketide synthase rstn3, the short chain dehydrogenase rstn4, the cyclase rstn5, the FAD-dependent monooxygenase rstn6 and the enoylreductase rstn7 are required to generate the first stable intermediate desmethylrestrictinol. Rstn3 with rstn7 biosynthesize the first polyketide chain intermediate that is reduced by rstn4, followed by epoxidation by rstn6 before 6-endo cyclization via epoxide opening by rstn5 leads to desmethylrestrictinol. The methyltransferase rstn1 then catalyzes the C4 O-methylation of desmethylrestrictinol to produce restrictinol, and the nonribosomal peptide synthetase rstn8 catalyzes the C3 esterification of restrictinol with glycine that leads to restricticin. The protein is O-methyltransferase rstn1 of Aspergillus nomiae NRRL (strain ATCC 15546 / NRRL 13137 / CBS 260.88 / M93).